We begin with the raw amino-acid sequence, 166 residues long: NAD(P)H-quinone oxidoreductase subunit I, chloroplastic (166 aa).

4Fe-4S ferredoxin-type domains lie at 55–84 and 95–124; these read GRIH…VDWK and LNYS…MTEE. Residues Cys-64, Cys-67, Cys-70, Cys-74, Cys-104, Cys-107, Cys-110, and Cys-114 each contribute to the [4Fe-4S] cluster site.

This sequence belongs to the complex I 23 kDa subunit family. In terms of assembly, NDH is composed of at least 16 different subunits, 5 of which are encoded in the nucleus. The cofactor is [4Fe-4S] cluster.

Its subcellular location is the plastid. It localises to the chloroplast thylakoid membrane. It carries out the reaction a plastoquinone + NADH + (n+1) H(+)(in) = a plastoquinol + NAD(+) + n H(+)(out). It catalyses the reaction a plastoquinone + NADPH + (n+1) H(+)(in) = a plastoquinol + NADP(+) + n H(+)(out). Functionally, NDH shuttles electrons from NAD(P)H:plastoquinone, via FMN and iron-sulfur (Fe-S) centers, to quinones in the photosynthetic chain and possibly in a chloroplast respiratory chain. The immediate electron acceptor for the enzyme in this species is believed to be plastoquinone. Couples the redox reaction to proton translocation, and thus conserves the redox energy in a proton gradient. The sequence is that of NAD(P)H-quinone oxidoreductase subunit I, chloroplastic from Espeletia timotensis (Andean giant rosette).